Consider the following 771-residue polypeptide: MDFIDFDTFTKDASGSDNDVFPQPQPPLSLPIASNLDQFSKKLSNLVLPGNILNNDNTKPSNEISEVDNVMEKYAKMSIDLIKRETGDVQLENEEDSKESSVRTSLSTRLSRVLNDSLSDATIREIFSNLQERFDKESNGYVVDLIESGIVGSMSRKKFKGRIESELIRNQSNILKQYQPIVKQLKQIEVKLNKLNELSVQTNDKINKNFDFSNKLNLEIKDLNDNKRLIGLKKNLLISFKEKFTLNEYEEFVLNSGDLNNEFFTTLARAERINENCSILLSLDNPQLGLKIIAKSNQMINRSIDRIVSYTNKTLGNMYSLSSKSRLATLHQCFKYLQNKLNYFNSIVNTFSESRSKVLVDEFNRQVQGDFEVNGQGRSSSISSDSRPIYMSAHDPVRFVGDLLAYVHSVSVNESETITSIFTMGDDNDKEFENIIQDVTDKILQSLSRPIKARVEQIVSTETKLSTLVQIFNLVELYNIMFTKQLGKAGNIVETVKQLIKVCQGRIFMIISNRLATIKNKNSTKLDLNLDLQPPEWIIEFYSDILPIVDQITTETILNLSPEENEKFLNLIVNEPIQVFNEHVDHNKVFSEKKDVLIIKSNFLDLILSKTIPVSLLSEKVLEVNEMIDKLTEEITQLELNNMLGQCGLYDYFNIINMICPFSDDFFEVSIYEPIKENKLYTKDSFVQVDEKVQEFFPSAMIEMQQSLLKLNSPIVVNQIIDNSFMQFVKFYCKLDLINKEYLDFSFTWSDMEIATLVGIEDVYSKDISIM.

This sequence belongs to the COG6 family.

It is found in the golgi apparatus membrane. Acts as a component of the peripheral membrane COG complex that is involved in intra-Golgi protein trafficking. COG is located at the cis-Golgi, and regulates tethering of retrograde intra-Golgi vesicles and possibly a number of other membrane trafficking events. In Candida albicans (strain SC5314 / ATCC MYA-2876) (Yeast), this protein is Conserved oligomeric Golgi complex subunit 6 (COG6).